A 562-amino-acid polypeptide reads, in one-letter code: Potassium-transporting ATPase potassium-binding subunit (562 aa).

12 helical membrane-spanning segments follow: residues 6–26 (FLLI…LGGF), 62–82 (YALA…VLLM), 132–152 (GLTV…FALI), 175–195 (LYVL…QGVL), 253–273 (FVQM…FGQV), 283–303 (LIWA…YAEL), 327–347 (FGIL…CGAV), 356–376 (ALGG…FGGV), 379–399 (GLYG…LMIG), 416–436 (MTAL…ALAL), 483–503 (LLLA…VLAI), and 526–546 (LFIG…FIPA).

This sequence belongs to the KdpA family. As to quaternary structure, the system is composed of three essential subunits: KdpA, KdpB and KdpC.

Its subcellular location is the cell inner membrane. Functionally, part of the high-affinity ATP-driven potassium transport (or Kdp) system, which catalyzes the hydrolysis of ATP coupled with the electrogenic transport of potassium into the cytoplasm. This subunit binds the periplasmic potassium ions and delivers the ions to the membrane domain of KdpB through an intramembrane tunnel. This is Potassium-transporting ATPase potassium-binding subunit from Yersinia pseudotuberculosis serotype IB (strain PB1/+).